Reading from the N-terminus, the 688-residue chain is Pentatricopeptide repeat-containing protein At3g18020 (688 aa).

PPR repeat units follow at residues 53–88 (DRAYWRRRIHSICAVRRNPDEALRILDGLCLRGYRP), 89–123 (DSLNLSSVIHSLCDAGRFDEAHRRFLLFLASGFIP), 124–158 (DERTCNVIIARLLYSRSPVSTLGVIHRLIGFKKEF), 161–195 (SLTNYNRLMNQLCTIYRVIDAHKLVFDMRNRGHLP), 196–230 (DVVTFTTLIGGYCEIRELEVAHKVFDEMRVCGIRP), 231–261 (NSLTLSVLIGGFLKMRDVETGRKLMKELWEY), 271–305 (KAAAFANLVDSMCREGYFNDIFEIAENMSLCESVN), 306–340 (VEFAYGHMIDSLCRYRRNHGAARIVYIMKSKGLKP), 341–375 (RRTSYNAIIHGLCKDGGCMRAYQLLEEGSEFEFFP), 376–406 (SEYTYKLLMESLCKELDTGKARNVLELMLRK), 411–445 (RTRIYNIYLRGLCVMDNPTEILNVLVSMLQGDCRP), 446–480 (DEYTLNTVINGLCKMGRVDDAMKVLDDMMTGKFCA), 482–517 (DAVTLNTVMCGLLAQGRAEEALDVLNRVMPENKIKP), 518–552 (GVVAYNAVIRGLFKLHKGDEAMSVFGQLEKASVTA), 553–583 (DSTTYAIIIDGLCVTNKVDMAKKFWDDVIWP), 588–622 (DAFVYAAFLKGLCQSGYLSDACHFLYDLADSGAIP), and 623–657 (NVVCYNTVIAECSRSGLKREAYQILEEMRKNGQAP).

Belongs to the PPR family. P subfamily.

The sequence is that of Pentatricopeptide repeat-containing protein At3g18020 from Arabidopsis thaliana (Mouse-ear cress).